A 315-amino-acid polypeptide reads, in one-letter code: Indoleacetate decarboxylase activating enzyme (315 aa).

Positions 21–311 constitute a Radical SAM core domain; sequence HDGPGIRTNV…ADIIEAHGVK (291 aa). [4Fe-4S] cluster contacts are provided by C35, C39, C42, C61, C64, C67, C71, C98, C101, C106, and C110. 2 4Fe-4S ferredoxin-type domains span residues 52 to 81 and 89 to 120; these read PQLL…AITD and GYVH…IAGE. Residues G149, 198–200, and H271 contribute to the S-adenosyl-L-methionine site; that span reads DCK.

This sequence belongs to the organic radical-activating enzymes family. The cofactor is [4Fe-4S] cluster.

The enzyme catalyses glycyl-[protein] + reduced [flavodoxin] + S-adenosyl-L-methionine = glycin-2-yl radical-[protein] + semiquinone [flavodoxin] + 5'-deoxyadenosine + L-methionine + H(+). Its function is as follows. Catalyzes activation of the indoleacetate decarboxylase OsIAD under anaerobic conditions by generation of an organic free radical on a glycine residue, via a homolytic cleavage of S-adenosyl-L-methionine (SAM). In Tractidigestivibacter scatoligenes (Olsenella scatoligenes), this protein is Indoleacetate decarboxylase activating enzyme.